Here is a 147-residue protein sequence, read N- to C-terminus: Hemoglobin subunit beta-1 (147 aa).

At Val2 the chain carries N-acetylvaline. In terms of domain architecture, Globin spans 3–147; sequence HLTDAEKAAV…VASALAHKYH (145 aa). Lys18 is subject to N6-succinyllysine. 3 positions are modified to phosphoserine: Ser45, Ser51, and Ser53. Lys60 is modified (N6-succinyllysine). Heme b contacts are provided by His64 and His93. An Asymmetric dimethylarginine modification is found at Arg105. Residue Thr124 is modified to Phosphothreonine.

Belongs to the globin family. As to quaternary structure, heterotetramer of two alpha chains and two beta chains. As to expression, red blood cells.

Its function is as follows. Involved in oxygen transport from the lung to the various peripheral tissues. This chain is Hemoglobin subunit beta-1 (Hbb), found in Rattus norvegicus (Rat).